The following is a 510-amino-acid chain: ATP synthase subunit alpha (510 aa).

Residue 169-176 (GDRQTGKT) participates in ATP binding.

It belongs to the ATPase alpha/beta chains family. F-type ATPases have 2 components, CF(1) - the catalytic core - and CF(0) - the membrane proton channel. CF(1) has five subunits: alpha(3), beta(3), gamma(1), delta(1), epsilon(1). CF(0) has three main subunits: a(1), b(2) and c(9-12). The alpha and beta chains form an alternating ring which encloses part of the gamma chain. CF(1) is attached to CF(0) by a central stalk formed by the gamma and epsilon chains, while a peripheral stalk is formed by the delta and b chains.

The protein resides in the cell inner membrane. It catalyses the reaction ATP + H2O + 4 H(+)(in) = ADP + phosphate + 5 H(+)(out). Functionally, produces ATP from ADP in the presence of a proton gradient across the membrane. The alpha chain is a regulatory subunit. The sequence is that of ATP synthase subunit alpha from Rickettsia massiliae (strain Mtu5).